The chain runs to 369 residues: Chorismate synthase (369 aa).

2 residues coordinate NADP(+): Arg48 and Arg54. FMN-binding positions include 125 to 127 (RSS), 238 to 239 (NA), Gly278, 293 to 297 (KPTSS), and Arg319.

The protein belongs to the chorismate synthase family. Homotetramer. Requires FMNH2 as cofactor.

It catalyses the reaction 5-O-(1-carboxyvinyl)-3-phosphoshikimate = chorismate + phosphate. It participates in metabolic intermediate biosynthesis; chorismate biosynthesis; chorismate from D-erythrose 4-phosphate and phosphoenolpyruvate: step 7/7. Its function is as follows. Catalyzes the anti-1,4-elimination of the C-3 phosphate and the C-6 proR hydrogen from 5-enolpyruvylshikimate-3-phosphate (EPSP) to yield chorismate, which is the branch point compound that serves as the starting substrate for the three terminal pathways of aromatic amino acid biosynthesis. This reaction introduces a second double bond into the aromatic ring system. This is Chorismate synthase from Burkholderia pseudomallei (strain 1106a).